We begin with the raw amino-acid sequence, 186 residues long: Casparian strip membrane protein 3 (186 aa).

Over 1 to 26 (MKGSSEHGETSKAAPLGRGGVSKGVS) the chain is Cytoplasmic. A helical transmembrane segment spans residues 27–47 (VLDLILRFIAIIGTLASAIAM). The Extracellular portion of the chain corresponds to 48–74 (GTTNETLPFFTQFIRFKAQYSDLPTLT). N-linked (GlcNAc...) asparagine glycosylation is present at asparagine 51. The helical transmembrane segment at 75–95 (FFVVANSIVCAYLILSLPLSI) threads the bilayer. The Cytoplasmic portion of the chain corresponds to 96–107 (VHIIRSRAKYSR). The chain crosses the membrane as a helical span at residues 108–128 (LLLIFLDAAMLALVTAGASAA). At 129 to 161 (AAIVYLAHKGNVRANWLAICQQFDSFCERISGS) the chain is on the extracellular side. The helical transmembrane segment at 162–182 (LIGSFGAMVMLILLILLSAIA) threads the bilayer. Over 183–186 (LARR) the chain is Cytoplasmic.

The protein belongs to the Casparian strip membrane proteins (CASP) family. In terms of assembly, homodimer and heterodimers.

The protein localises to the cell membrane. Functionally, regulates membrane-cell wall junctions and localized cell wall deposition. Required for establishment of the Casparian strip membrane domain (CSD) and the subsequent formation of Casparian strips, a cell wall modification of the root endodermis that determines an apoplastic barrier between the intraorganismal apoplasm and the extraorganismal apoplasm and prevents lateral diffusion. This is Casparian strip membrane protein 3 from Sorghum bicolor (Sorghum).